A 225-amino-acid chain; its full sequence is MGFGDLKSPAGLQVLNDYLADKSYIEGYVPSQADVAVFEAVSGPPPADLCHALRWYNHIKSYEKEKASLPGVKKALGKYGPANVEDTTESGATDSKDDDDIDLFGSDDEEESEEAKRLREERLAQYESKKAKKPALVAKSSILLDVKPWDDETDMAKLEECVRSIQADGLVWGSSKLVPVGYGIKKLQIQCVVEDDKVGTDMLEEQITAFDEYVQSMDVAAFNKI.

Residues 2 to 90 form the GST C-terminal domain; the sequence is GFGDLKSPAG…PANVEDTTES (89 aa). Lys-7 is modified (N6-acetyllysine). Ser-8 and Ser-42 each carry phosphoserine. Residues 78-115 form a disordered region; it reads KYGPANVEDTTESGATDSKDDDDIDLFGSDDEEESEEA. Thr-88 and Thr-93 each carry phosphothreonine. Ser-95 is modified (phosphoserine). The segment covering 96-113 has biased composition (acidic residues); sequence KDDDDIDLFGSDDEEESE. A Phosphoserine; by CK2 modification is found at Ser-106. Lys-147 is covalently cross-linked (Glycyl lysine isopeptide (Lys-Gly) (interchain with G-Cter in SUMO2)). Ser-174 carries the phosphoserine modification.

This sequence belongs to the EF-1-beta/EF-1-delta family. In terms of assembly, EF-1 is composed of 4 subunits: alpha, beta (alpha subunit of the eEF1B subcomplex), delta (beta subunit of the eEF1B subcomplex), and gamma (gamma subunit of the eEF1B subcomplex). Interacts with elongation factor EEF1A1. Post-translationally, phosphorylation affects the GDP/GTP exchange rate.

Its function is as follows. Catalytic subunit of the guanine nucleotide exchange factor (GEF) (eEF1B subcomplex) of the eukaryotic elongation factor 1 complex (eEF1). Stimulates the exchange of GDP for GTP on elongation factor 1A (eEF1A), probably by displacing GDP from the nucleotide binding pocket in eEF1A. This is Elongation factor 1-beta (EEF1B) from Bos taurus (Bovine).